Consider the following 262-residue polypeptide: Capsid protein (262 aa).

Positions 183–262 (APTIEAITRP…SHHRSPSPRK (80 aa)) are disordered. The Bipartite nuclear localization signal signature appears at 215-233 (RRRKVKTTVVYGRRRSKSR). Over residues 215–234 (RRRKVKTTVVYGRRRSKSRD) the composition is skewed to basic residues. A phosphoserine; by host mark is found at Ser-232, Ser-239, and Ser-245. Basic residues predominate over residues 252 to 262 (SSHHRSPSPRK). Residues 254–260 (HHRSPSP) are RNA binding.

It belongs to the avihepadnavirus core antigen family. In terms of assembly, homodimerizes, then multimerizes.

It localises to the virion. The protein resides in the host cytoplasm. Self assembles to form an icosahedral capsid. Most capsid appear to be large particles with an icosahedral symmetry of T=4 and consist of 240 copies of capsid protein, though a fraction forms smaller T=3 particles consisting of 180 capsid proteins. Entering capsid are transported along microtubules to the nucleus. Phosphorylation of the capsid is thought to induce exposure of nuclear localization signal in the C-terminal portion of the capsid protein that allows binding to the nuclear pore complex via the importin (karyopherin-) alpha and beta. Capsids are imported in intact form through the nuclear pore into the nuclear basket, where it probably binds NUP153. Only capsids that contain the mature viral genome can release the viral DNA and capsid protein into the nucleoplasm. Immature capsids get stucked in the basket. Capsids encapsulate the pre-genomic RNA and the P protein. Pre-genomic RNA is reverse transcribed into DNA while the capsid is still in the cytoplasm. The capsid can then either be directed to the nucleus, providing more genome for transcription, or bud through the endoplasmic reticulum to provide new virions. In Anas (ducks), this protein is Capsid protein (C).